A 435-amino-acid polypeptide reads, in one-letter code: Phospholipase A1 EG1, chloroplastic/mitochondrial (435 aa).

Residues 1–31 constitute a chloroplast and mitochondrion transit peptide; it reads MTLPRQCAAACRTGGGGGGVVRCRAVAAAGG. The short motif at 264-268 is the GXSXG element; that stretch reads GHSMG. Serine 266 serves as the catalytic Acyl-ester intermediate. Catalysis depends on charge relay system residues aspartate 324 and histidine 371.

The protein belongs to the AB hydrolase superfamily. Lipase family.

Its subcellular location is the mitochondrion. The protein localises to the plastid. It localises to the chloroplast. It catalyses the reaction a 1,2-diacyl-sn-glycero-3-phosphocholine + H2O = a 2-acyl-sn-glycero-3-phosphocholine + a fatty acid + H(+). Functionally, phospholipase that releases free fatty acids from phospholipids. Catalyzes the initial step of jasmonate (JA) biosynthesis. Required for the biosynthesis of endogenous JA in seedling, inflorescence and spikelets. Not essential for JA biosynthesis after wounding. Mediates spikelet development and specification of empty-glume identity. Functions in a high temperature-dependent manner to maintain floral developmental robustness under heat stress conditions. Functions by safeguarding the expression of several floral identity genes, such as MADS1, MADS6 and G1. In Oryza sativa subsp. indica (Rice), this protein is Phospholipase A1 EG1, chloroplastic/mitochondrial.